The primary structure comprises 966 residues: Alpha-1,4 glucan phosphorylase L-1 isozyme, chloroplastic/amyloplastic (966 aa).

Residues 1-50 (MATANGAHLFNHYSSNSRFIHFTSRNTSSKLFLTKTSHFRRPKRCFHVNN) constitute a chloroplast transit peptide. K812 carries the post-translational modification N6-(pyridoxal phosphate)lysine.

It belongs to the glycogen phosphorylase family. The cofactor is pyridoxal 5'-phosphate. Tuber.

It is found in the plastid. It localises to the chloroplast. Its subcellular location is the amyloplast. The catalysed reaction is [(1-&gt;4)-alpha-D-glucosyl](n) + phosphate = [(1-&gt;4)-alpha-D-glucosyl](n-1) + alpha-D-glucose 1-phosphate. Phosphorylase is an important allosteric enzyme in carbohydrate metabolism. Enzymes from different sources differ in their regulatory mechanisms and in their natural substrates. However, all known phosphorylases share catalytic and structural properties. In Solanum tuberosum (Potato), this protein is Alpha-1,4 glucan phosphorylase L-1 isozyme, chloroplastic/amyloplastic.